The chain runs to 710 residues: Interferon-induced GTP-binding protein Mx2 (710 aa).

Positions M1–Y87 are disordered. 2 stretches are compositionally biased toward polar residues: residues Q39–E50 and N58–S79. In terms of domain architecture, Dynamin-type G spans D112 to P383. The interval G122–S129 is G1 motif. G122–S129 is a GTP binding site. The interval I147 to R149 is G2 motif. The G3 motif stretch occupies residues D221–G224. GTP contacts are provided by residues D221–I225 and T290–D293. The tract at residues T290–D293 is G4 motif. A G5 motif region spans residues K322–G325. The 92-residue stretch at I619 to G710 folds into the GED domain.

This sequence belongs to the TRAFAC class dynamin-like GTPase superfamily. Dynamin/Fzo/YdjA family.

The protein localises to the cytoplasm. It is found in the nucleus. In terms of biological role, interferon-induced dynamin-like GTPase with antiviral activity against vesicular stomatitis virus (VSV). This Bubalus bubalis (Domestic water buffalo) protein is Interferon-induced GTP-binding protein Mx2 (MX2).